Here is a 527-residue protein sequence, read N- to C-terminus: Abrin-b (527 aa).

Position 1 is a pyrrolidone carboxylic acid (Q1). N110 carries N-linked (GlcNAc...) asparagine glycosylation. Residue E163 is part of the active site. Cystine bridges form between C246/C268, C285/C304, and C328/C345. The 128-residue stretch at 272–399 folds into the Ricin B-type lectin 1 domain; sequence YEPTVRIGGR…YLMRQGWRTG (128 aa). The stretch at 282–324 is one 1-alpha repeat; that stretch reads NGMCVDVYDDGYHNGNRIIAWKCKDRLEENQLWTLKSDKTIRS. Residues 325-365 form a 1-beta repeat; that stretch reads NGKCLTTEGYAPGNYVMIYDCTSAVAEATYWEIWDNGTIIN. N360 and N400 each carry an N-linked (GlcNAc...) asparagine glycan. A 1-gamma repeat occupies 368–400; the sequence is SALVLSAESSSMGGTLTVQTNEYLMRQGWRTGN. Positions 402–526 constitute a Ricin B-type lectin 2 domain; sequence TSPFVTSISG…GKPNQIWLTL (125 aa). The stretch at 413–448 is one 2-alpha repeat; the sequence is SDLCMQAQGSNVWLAYCDNNKKEQQWALYTDGSIRS. 2 disulfides stabilise this stretch: C416–C429 and C455–C472. The 2-beta repeat unit spans residues 452-491; sequence TNNCLTSKDHKQGSPIVLMACSNGWASQRWLFRNDGSIYN. Residues 494 to 527 form a 2-gamma repeat; sequence DDMVMDVKRSDPSLKEIILHPYHGKPNQIWLTLF.

In the N-terminal section; belongs to the ribosome-inactivating protein family. Type 2 RIP subfamily. Disulfide-linked dimer of A and B chains.

The catalysed reaction is Endohydrolysis of the N-glycosidic bond at one specific adenosine on the 28S rRNA.. Functionally, the A chain is responsible for inhibiting protein synthesis through the catalytic inactivation of 60S ribosomal subunits by removing adenine from position 4,324 of 28S rRNA. Abrin-a is more toxic than ricin. Its function is as follows. The B chain is a galactose-specific lectin that facilitates the binding of abrin to the cell membrane that precedes endocytosis. This is Abrin-b from Abrus precatorius (Indian licorice).